The following is a 435-amino-acid chain: Methylenetetrahydrofolate--tRNA-(uracil-5-)-methyltransferase TrmFO (435 aa).

FAD is bound at residue Gly-10–Gly-15.

It belongs to the MnmG family. TrmFO subfamily. The cofactor is FAD.

The protein resides in the cytoplasm. The enzyme catalyses uridine(54) in tRNA + (6R)-5,10-methylene-5,6,7,8-tetrahydrofolate + NADH + H(+) = 5-methyluridine(54) in tRNA + (6S)-5,6,7,8-tetrahydrofolate + NAD(+). It carries out the reaction uridine(54) in tRNA + (6R)-5,10-methylene-5,6,7,8-tetrahydrofolate + NADPH + H(+) = 5-methyluridine(54) in tRNA + (6S)-5,6,7,8-tetrahydrofolate + NADP(+). In terms of biological role, catalyzes the folate-dependent formation of 5-methyl-uridine at position 54 (M-5-U54) in all tRNAs. The protein is Methylenetetrahydrofolate--tRNA-(uracil-5-)-methyltransferase TrmFO of Halalkalibacterium halodurans (strain ATCC BAA-125 / DSM 18197 / FERM 7344 / JCM 9153 / C-125) (Bacillus halodurans).